Consider the following 515-residue polypeptide: GMP synthase [glutamine-hydrolyzing] (515 aa).

The region spanning 10-200 (TIIVLDFGSQ…VFGVCGCSEG (191 aa)) is the Glutamine amidotransferase type-1 domain. C87 acts as the Nucleophile in catalysis. Residues H174 and E176 contribute to the active site. The GMPS ATP-PPase domain maps to 201 to 390 (WNMENFIEVE…LGIPDEIVWR (190 aa)). 228–234 (SGGVDSS) provides a ligand contact to ATP.

In terms of assembly, homodimer.

It catalyses the reaction XMP + L-glutamine + ATP + H2O = GMP + L-glutamate + AMP + diphosphate + 2 H(+). It participates in purine metabolism; GMP biosynthesis; GMP from XMP (L-Gln route): step 1/1. Catalyzes the synthesis of GMP from XMP. This Bacillus thuringiensis subsp. konkukian (strain 97-27) protein is GMP synthase [glutamine-hydrolyzing].